Reading from the N-terminus, the 206-residue chain is Large ribosomal subunit protein uL22m (206 aa).

Residues 1–40 constitute a mitochondrion transit peptide; sequence MAAAVLGQLGALWIHNLRSRGKLALGVLPQSYIHTSASLD.

The protein belongs to the universal ribosomal protein uL22 family. In terms of assembly, component of the mitochondrial large ribosomal subunit (mt-LSU). Mature mammalian 55S mitochondrial ribosomes consist of a small (28S) and a large (39S) subunit. The 28S small subunit contains a 12S ribosomal RNA (12S mt-rRNA) and 30 different proteins. The 39S large subunit contains a 16S rRNA (16S mt-rRNA), a copy of mitochondrial valine transfer RNA (mt-tRNA(Val)), which plays an integral structural role, and 52 different proteins.

The protein localises to the mitochondrion. This chain is Large ribosomal subunit protein uL22m (MRPL22), found in Homo sapiens (Human).